The following is a 416-amino-acid chain: Enolase (416 aa).

Residue glutamine 160 participates in (2R)-2-phosphoglycerate binding. Catalysis depends on glutamate 204, which acts as the Proton donor. Residues aspartate 239, glutamate 282, and aspartate 308 each coordinate Mg(2+). Residues lysine 333, arginine 362, serine 363, and lysine 384 each contribute to the (2R)-2-phosphoglycerate site. The active-site Proton acceptor is lysine 333.

It belongs to the enolase family. Requires Mg(2+) as cofactor.

Its subcellular location is the cytoplasm. It is found in the secreted. It localises to the cell surface. The catalysed reaction is (2R)-2-phosphoglycerate = phosphoenolpyruvate + H2O. The protein operates within carbohydrate degradation; glycolysis; pyruvate from D-glyceraldehyde 3-phosphate: step 4/5. In terms of biological role, catalyzes the reversible conversion of 2-phosphoglycerate (2-PG) into phosphoenolpyruvate (PEP). It is essential for the degradation of carbohydrates via glycolysis. The sequence is that of Enolase from Metallosphaera sedula (strain ATCC 51363 / DSM 5348 / JCM 9185 / NBRC 15509 / TH2).